Consider the following 299-residue polypeptide: Superkiller complex protein 8 (299 aa).

WD repeat units lie at residues 11–48 (AHED…FLTE), 54–93 (KHIL…LHKT), 96–135 (SGPL…KLRS), 138–177 (NTNK…RVSE), 180–219 (AHGV…PYIA), 223–263 (GHSS…LDSS), and 266–299 (AHAD…ALKQ).

Belongs to the SKI8 family.

The chain is Superkiller complex protein 8 (skic8) from Dictyostelium discoideum (Social amoeba).